Reading from the N-terminus, the 544-residue chain is Chaperonin GroEL 1 (544 aa).

Residues 29-32, 86-90, glycine 413, 479-481, and aspartate 495 contribute to the ATP site; these read TLGP, DGTTT, and NAA.

This sequence belongs to the chaperonin (HSP60) family. As to quaternary structure, forms a cylinder of 14 subunits composed of two heptameric rings stacked back-to-back. Interacts with the co-chaperonin GroES.

Its subcellular location is the cytoplasm. It catalyses the reaction ATP + H2O + a folded polypeptide = ADP + phosphate + an unfolded polypeptide.. Functionally, together with its co-chaperonin GroES, plays an essential role in assisting protein folding. The GroEL-GroES system forms a nano-cage that allows encapsulation of the non-native substrate proteins and provides a physical environment optimized to promote and accelerate protein folding. The sequence is that of Chaperonin GroEL 1 from Parasynechococcus marenigrum (strain WH8102).